The following is a 126-amino-acid chain: Cystatin-C (126 aa).

An N-terminal signal peptide occupies residues 1–18 (MKMLVFPVLAALFAVGLG). The Cystatin domain occupies 22-115 (GAPRDINISE…CTFSVWSRPW (94 aa)). Positions 64 to 68 (QVVSG) match the Secondary area of contact motif. 2 disulfide bridges follow: cysteine 82/cysteine 92 and cysteine 106/cysteine 126.

The protein belongs to the cystatin family. As to expression, ubiquitously expressed in normal tissues including brain, eye, gill, heart, gullet, liver, spleen, stomach, pyloric ceca, intestine, kidney and muscle. Expressed, but not up-regulated, in lipopolysaccharide (LPS)-stimulated tissues including kidney, spleen, muscle and gill.

The protein localises to the secreted. Functionally, thiol protease inhibitor. Has high papain inhibitory activity and inhibits to a lesser extent fish cathepsins L, S, K, F, X and bovine cathepsin B in vitro. The chain is Cystatin-C from Paralichthys olivaceus (Bastard halibut).